Consider the following 137-residue polypeptide: Fatty acid-binding protein homolog 7 (137 aa).

Belongs to the calycin superfamily. Fatty-acid binding protein (FABP) family.

In Caenorhabditis elegans, this protein is Fatty acid-binding protein homolog 7 (lbp-7).